The sequence spans 246 residues: Probable transcriptional regulatory protein Teth39_1009 (246 aa).

The interval 1-21 (MSGHSKWANIKHKKEKMDAKK) is disordered.

This sequence belongs to the TACO1 family.

It is found in the cytoplasm. This is Probable transcriptional regulatory protein Teth39_1009 from Thermoanaerobacter pseudethanolicus (strain ATCC 33223 / 39E) (Clostridium thermohydrosulfuricum).